Consider the following 363-residue polypeptide: Circumsporozoite protein (363 aa).

Residues 1-22 (MKNFILLAVSSILLVDLLPTHF) form the signal peptide. A compositionally biased stretch (polar residues) spans 48–57 (GAQQVRQSAS). A disordered region spans residues 48 to 278 (GAQQVRQSAS…GQNNQGANAP (231 aa)). Residues 61-96 (GLGEKPKEGADKEKKKEKGKEKEEEPKKPNENKLKQ) are compositionally biased toward basic and acidic residues. The tract at residues 80–88 (KEKEEEPKK) is required for the binding to heparan sulfate proteoglycans (HSPGs) on the surface of host hepatocytes. The region I; contains the proteolytic cleavage site stretch occupies residues 93–97 (KLKQP). Residues 98-109 (NEGQPQAQGDGA) form a 1; approximate repeat. The 12 X 12 AA approximate tandem repeats of N-A-G-Q-P-Q-A-Q-G-D-G-A stretch occupies residues 98 to 241 (NEGQPQAQGD…GQPQAQGDGA (144 aa)). 11 repeat units span residues 110-121 (NAGQPQAQGDGA), 122-133 (NAGQPQAQGDGA), 134-145 (NAGQPQAQGDGA), 146-157 (NAGQPQAQGDGA), 158-169 (NAGQPQAQGDGA), 170-181 (NAGQPQAQGDGA), 182-193 (NAGQPQAQGDGA), 194-205 (NAGQPQAQGDGA), 206-217 (NAGQPQAQGDGA), 218-229 (NAGQPQAQGDGA), and 230-241 (NAGQPQAQGDGA). A compositionally biased stretch (gly residues) spans 248 to 259 (RNGGGAPAGGNE). Positions 260–277 (GNKQAGKGQGQNNQGANA) are enriched in low complexity. In terms of domain architecture, TSP type-1 spans 289-341 (KIRSSVTTEWTPCSVTCGNGVRIRRKAHAGNKKAEDLTMDDLEVEACVMDKCA). Cystine bridges form between cysteine 301–cysteine 335 and cysteine 305–cysteine 340. O-linked (Fuc) threonine glycosylation is present at threonine 304. Cysteine 340 carries the GPI-anchor amidated cysteine lipid modification. Residues 341-363 (AGIFNVVSNSLGLVILLVLALFN) constitute a propeptide, removed in mature form.

The protein belongs to the plasmodium circumsporozoite protein family. During host cell invasion, proteolytically cleaved at the cell membrane in the region I by a papain-like cysteine protease of parasite origin. Cleavage is triggered by the sporozoite contact with highly sulfated heparan sulfate proteoglycans (HSPGs) present on the host hepatocyte cell surface. Cleavage exposes the TSP type-1 (TSR) domain and is required for productive invasion of host hepatocytes but not for adhesion to the host cell membrane. Cleavage is dispensable for sporozoite development in the oocyst, motility and for traversal of host and vector cells. Post-translationally, O-glycosylated; maybe by POFUT2.

The protein resides in the cell membrane. It is found in the cytoplasm. Functionally, essential sporozoite protein. In the mosquito vector, required for sporozoite development in the oocyst, migration through the vector hemolymph and entry into the vector salivary glands. In the vertebrate host, required for sporozoite migration through the host dermis and infection of host hepatocytes. Binds to highly sulfated heparan sulfate proteoglycans (HSPGs) on the surface of host hepatocytes. In the vertebrate host, binds to highly sulfated heparan sulfate proteoglycans (HSPGs) on the surface of host hepatocytes and is required for sporozoite invasion of the host hepatocytes. The protein is Circumsporozoite protein of Plasmodium knowlesi (strain H).